A 116-amino-acid polypeptide reads, in one-letter code: MAAALTFRRLLALPRAARGFGVRVSLSGEKITHTGQVSDGKDYRGIRFVDRQKEVNENFAIDLIAQQPVNEVDRRIIACDGGGGALGHPKVYINLDKETKTGTCAYCGLQFKQQHH.

The N-terminal 20 residues, Met1–Phe20, are a transit peptide targeting the mitochondrion. At Lys90 the chain carries N6-acetyllysine.

Belongs to the complex I NDUFS6 subunit family. Mammalian complex I is composed of 45 different subunits. This is a component of the iron-sulfur (IP) fragment of the enzyme.

It localises to the mitochondrion inner membrane. Its function is as follows. Accessory subunit of the mitochondrial membrane respiratory chain NADH dehydrogenase (Complex I), that is believed not to be involved in catalysis. Complex I functions in the transfer of electrons from NADH to the respiratory chain. The immediate electron acceptor for the enzyme is believed to be ubiquinone. This Rattus norvegicus (Rat) protein is NADH dehydrogenase [ubiquinone] iron-sulfur protein 6, mitochondrial (Ndufs6).